The following is a 550-amino-acid chain: Metal transporter Nramp3 (550 aa).

Residues 1–26 (MSGPMQRSSQPQFISSVERNNQSNGP) show a composition bias toward polar residues. A disordered region spans residues 1–30 (MSGPMQRSSQPQFISSVERNNQSNGPGTPL). Helical transmembrane passes span 50 to 70 (LFSY…PGNF), 83 to 103 (ELLW…SLAA), 127 to 147 (FILW…EVIG), 158 to 178 (IPVW…LLLQ), 185 to 205 (LEFL…VELG), 233 to 253 (ISLL…ALVL), 276 to 296 (AFAL…SGAV), 333 to 353 (LFAV…TYAG), 368 to 390 (WIRN…IIGG), 397 to 417 (LIII…VPLL), 435 to 455 (ISVI…YFLI), and 473 to 493 (VFSG…ILYL). The disordered stretch occupies residues 523-550 (GEGSLGHLPREDISSMQLPQQRTASDLD). Polar residues predominate over residues 536 to 550 (SSMQLPQQRTASDLD).

Belongs to the NRAMP (TC 2.A.55) family.

Its subcellular location is the membrane. Its function is as follows. Probable metal transporter. The polypeptide is Metal transporter Nramp3 (NRAMP3) (Oryza sativa subsp. japonica (Rice)).